We begin with the raw amino-acid sequence, 105 residues long: Large ribosomal subunit protein uL24 (105 aa).

It belongs to the universal ribosomal protein uL24 family. As to quaternary structure, part of the 50S ribosomal subunit.

Functionally, one of two assembly initiator proteins, it binds directly to the 5'-end of the 23S rRNA, where it nucleates assembly of the 50S subunit. One of the proteins that surrounds the polypeptide exit tunnel on the outside of the subunit. This is Large ribosomal subunit protein uL24 from Clostridium botulinum (strain Langeland / NCTC 10281 / Type F).